The sequence spans 237 residues: Tyrosine-protein kinase YwqD (237 aa).

Tyr-228 carries the post-translational modification Phosphotyrosine; by autocatalysis.

This sequence belongs to the CpsD/CapB family. In terms of processing, autophosphorylated in vitro, which inhibits ATPase activity. Dephosphorylated by YwqE in vitro.

The enzyme catalyses L-tyrosyl-[protein] + ATP = O-phospho-L-tyrosyl-[protein] + ADP + H(+). In terms of biological role, may be involved in the regulation of capsular polysaccharide biosynthesis. Autophosphorylates in vitro. Phosphorylates and activates in vitro two UDP-glucose dehydrogenases, YwqF and TuaD, as well as the DNA-binding proteins Ssb and SsbB. The sequence is that of Tyrosine-protein kinase YwqD (ywqD) from Bacillus subtilis (strain 168).